Reading from the N-terminus, the 465-residue chain is MDKDQFHVIIVGGSIAGLTLAHCLHRAGISHVVLEKASEPAPQIGASIGILPNGARVLDQLQLYETIEQYIEPLETATIGYPDGFRFSSSYPKLVNERFGFPIAFLDRQKLLEILYQHYPDKSRIRLAARVVSIESSSIDSTITMEDGTIYKGHLIVGADGVHSRVRAEMWKAAQRINPGMTVEYSCIFGISAPIKGLIVGEQVNAFFDHLTIVTIHGKKGRVYWFLIQKLDRKYVYPECPRFTAKEIGPIVNHLKEVKFFKDITFGQLWDSRETASMTALEENVFDTWYHGRMVLMGDSAHKMTPNIGQGANMAIEDAAVLSSLLSDLLQKQTQPPTNAQIEKLLAQYREVRHPRVNSIYKTSRFLVRFQARDGIFNTLFGRYYAPHAGDLPADMASKTIAGGELCAYLPSPSRCSYGWEKYKNSGLGRTVWCVLVLLLSALTWSCLGNMNIIMELPKRVSMMR.

The helical transmembrane segment at 5–25 threads the bilayer; that stretch reads QFHVIIVGGSIAGLTLAHCLH. FAD contacts are provided by Glu-35, Gly-49, Arg-108, Asp-299, and Ala-312. The helical transmembrane segment at 435–455 threads the bilayer; sequence VLVLLLSALTWSCLGNMNIIM.

It belongs to the paxM FAD-dependent monooxygenase family. The cofactor is FAD.

The protein localises to the membrane. It functions in the pathway secondary metabolite biosynthesis. Its function is as follows. FAD-dependent monooxygenase; part of the gene cluster that mediates the biosynthesis of the indole diterpenes penitrems. The geranylgeranyl diphosphate (GGPP) synthase penG catalyzes the first step in penitrem biosynthesis via conversion of farnesyl pyrophosphate and isopentyl pyrophosphate into geranylgeranyl pyrophosphate (GGPP). Condensation of indole-3-glycerol phosphate with GGPP by the prenyl transferase penC then forms 3-geranylgeranylindole (3-GGI). Epoxidation by the FAD-dependent monooxygenase penM leads to a epoxidized-GGI that is substrate of the terpene cyclase penB for cyclization to yield paspaline. Paspaline is subsequently converted to 13-desoxypaxilline by the cytochrome P450 monooxygenase penP, the latter being then converted to paxilline by the cytochrome P450 monooxygenase penQ. Paxilline is converted to beta-paxitriol via C-10 ketoreduction by the short-chain dehydrogenase PC-15 which can be monoprenylated at the C-20 by the indole diterpene prenyltransferase penD. A two-step elimination (acetylation and elimination) process performed by the O-acetyltransferase PC-16 and the P.simplicissimum ptmI-ortholog not yet identified in P.crustosum, leads to the production of the prenylated form of penijanthine. The FAD-linked oxidoreductase ptmO then converts the prenylated form of penijanthine into PC-M5 which is in turn transformed into PC-M4 by the aromatic dimethylallyltransferase PC-22. A series of oxidation steps involving 4 cytochrome P450 monooxygenases (PC-21, PC-05, PC-23, PC-20) and a FAD-dependent monooxygenase (PC-14) are required for the transformation of PC-M4 to penitrems A and E. Synthesis of these final products is proposed to proceed via penitrems D and C (PC-21, PC-05, PC-14) and penitrems B and F (PC-21, PC-05, PC-14, PC-23). The sequence is that of FAD-dependent monooxygenase penM from Penicillium crustosum (Blue mold fungus).